Here is a 305-residue protein sequence, read N- to C-terminus: Ornithine carbamoyltransferase (305 aa).

Residues 47–50 (STRT), Arg-98, and 125–128 (HPCQ) each bind carbamoyl phosphate. L-ornithine is bound by residues Asn-156, Asp-221, and 225 to 226 (SM). Carbamoyl phosphate is bound by residues 262–263 (CL) and Arg-290.

The protein belongs to the aspartate/ornithine carbamoyltransferase superfamily. OTCase family.

The protein resides in the cytoplasm. The catalysed reaction is carbamoyl phosphate + L-ornithine = L-citrulline + phosphate + H(+). It functions in the pathway amino-acid biosynthesis; L-arginine biosynthesis; L-arginine from L-ornithine and carbamoyl phosphate: step 1/3. Reversibly catalyzes the transfer of the carbamoyl group from carbamoyl phosphate (CP) to the N(epsilon) atom of ornithine (ORN) to produce L-citrulline. The protein is Ornithine carbamoyltransferase of Methanococcus vannielii (strain ATCC 35089 / DSM 1224 / JCM 13029 / OCM 148 / SB).